The primary structure comprises 431 residues: Neuronal pentraxin-2 (431 aa).

The first 15 residues, 1–15, serve as a signal peptide directing secretion; that stretch reads MLALLAASVALAVAA. N-linked (GlcNAc...) asparagine glycans are attached at residues Asn148 and Asn189. Residues 223-424 enclose the Pentraxin (PTX) domain; sequence DAFKVSLPLR…GASKWPVETC (202 aa). Residues Cys253 and Cys313 are joined by a disulfide bond. The Ca(2+) site is built by Asn277, Glu355, Gln356, Asp357, and Gln367. N-linked (GlcNAc...) asparagine glycosylation occurs at Asn393.

As to quaternary structure, homooligomer or heterooligomer (probably pentamer) with neuronal pentraxin receptor (NPTXR). Requires Ca(2+) as cofactor. Brain, pancreas, liver, heart and skeletal muscle. Highest levels are seen in the testis.

The protein localises to the secreted. Functionally, likely to play role in the modification of cellular properties that underlie long-term plasticity. Binds to agar matrix in a calcium-dependent manner. The protein is Neuronal pentraxin-2 (NPTX2) of Homo sapiens (Human).